A 256-amino-acid polypeptide reads, in one-letter code: MNNAIFPNKFKAALAAQQVQIGCWSALASPITTEVLGLAGFDWLVLDGEHAPNDVTTLIPQLMALKGSASAPVVRVPTNEPVIIKRMLDIGFYNFLIPFVETQEEAARAVASTRYPPEGIRGVSVSHRANMFGTVPDYFAQSNKNITIIVQIESQLGVDNVDAIAATEGVDGIFVGPSDLAAALSHLGNASHPDVQQTIQHIFARAKAHGKPCGILAPVEADARRYLEWGATFVAVGSDLGAFRASTQKLADTFKK.

His-50 (proton acceptor) is an active-site residue. Residue Gln-151 participates in substrate binding. Residue Glu-153 participates in Mg(2+) binding. Residues Ser-178 and Asp-179 each contribute to the substrate site. Asp-179 contacts Mg(2+).

The protein belongs to the HpcH/HpaI aldolase family. KDGluc aldolase subfamily. Homohexamer; trimer of dimers. It depends on Mg(2+) as a cofactor.

It carries out the reaction 5-dehydro-4-deoxy-D-glucarate = 2-hydroxy-3-oxopropanoate + pyruvate. The catalysed reaction is 2-dehydro-3-deoxy-D-glucarate = 2-hydroxy-3-oxopropanoate + pyruvate. It functions in the pathway carbohydrate acid metabolism; galactarate degradation; D-glycerate from galactarate: step 2/3. Its function is as follows. Catalyzes the reversible retro-aldol cleavage of both 5-keto-4-deoxy-D-glucarate and 2-keto-3-deoxy-D-glucarate to pyruvate and tartronic semialdehyde. The chain is 5-keto-4-deoxy-D-glucarate aldolase from Salmonella gallinarum (strain 287/91 / NCTC 13346).